Reading from the N-terminus, the 628-residue chain is Modular serine protease (628 aa).

Residues 1–25 form the signal peptide; sequence MQLISFLSNPLFFCALLLKFRTIFA. 4 LDL-receptor class A domains span residues 26–64, 69–107, 122–163, and 166–204; these read ACDS…LTCV, HCTK…LRCG, NCKE…ELCG, and ECPA…LLCN. 12 cysteine pairs are disulfide-bonded: Cys27–Cys39, Cys34–Cys52, Cys46–Cys63, Cys70–Cys82, Cys77–Cys95, Cys89–Cys106, Cys123–Cys135, Cys130–Cys149, Cys143–Cys162, Cys167–Cys179, Cys174–Cys192, and Cys186–Cys203. N-linked (GlcNAc...) asparagine glycosylation is present at Asn36. The N-linked (GlcNAc...) asparagine glycan is linked to Asn204. Sushi domains follow at residues 222-285 and 300-356; these read LGCP…KCVK and ALCT…RCEQ. Intrachain disulfides connect Cys224/Cys270, Cys256/Cys283, Cys302/Cys341, and Cys326/Cys354. In terms of domain architecture, Peptidase S1 spans 369-621; the sequence is SSGGYTINNT…FEDMILNAMN (253 aa). Asn376 carries an N-linked (GlcNAc...) asparagine glycan. Cysteines 399 and 415 form a disulfide. Residues His414, Asp472, and Ser563 each act as charge relay system in the active site. An N-linked (GlcNAc...) asparagine glycan is attached at Asn621.

It belongs to the peptidase S1 family. May be proteolytically cleaved via an autocatalytic mechanism.

It localises to the secreted. In terms of biological role, serine protease that plays a key role in innate immunity by activating the Toll pathway in response to infection with Gram-positive bacteria and fungi. During Gram-positive infection, acts downstream of PGRP-SA and upstream of Grass and Spz, and therefore appears to function in a pathway that links detection of Gram-positive lysine-type peptidoglycans to Toll activation. Functions in a separate pathway to the psh-mediated activation of the Toll pathway. This chain is Modular serine protease, found in Drosophila melanogaster (Fruit fly).